The following is a 707-amino-acid chain: D-(-)-3-hydroxybutyrate oligomer hydrolase (707 aa).

The signal sequence occupies residues 1–32 (MASVFKVRSASGHVPVVRTLAAMMAVTVVLTA). Ser321 functions as the Charge relay system in the catalytic mechanism.

It belongs to the D-(-)-3-hydroxybutyrate oligomer hydrolase family.

It is found in the secreted. It carries out the reaction (3R)-hydroxybutanoate dimer + H2O = 2 (R)-3-hydroxybutanoate + H(+). The protein operates within lipid metabolism; butanoate metabolism. Participates in the degradation of poly-3-hydroxybutyrate (PHB). It works downstream of poly(3-hydroxybutyrate) depolymerase, hydrolyzing D(-)-3-hydroxybutyrate oligomers of various length (3HB-oligomers) into 3HB-monomers. The chain is D-(-)-3-hydroxybutyrate oligomer hydrolase from Paraburkholderia xenovorans (strain LB400).